The sequence spans 257 residues: Phycoerythrobilin:ferredoxin oxidoreductase (257 aa).

The protein belongs to the HY2 family.

The enzyme catalyses (3Z)-phycoerythrobilin + oxidized 2[4Fe-4S]-[ferredoxin] = 15,16-dihydrobiliverdin + reduced 2[4Fe-4S]-[ferredoxin] + 2 H(+). Functionally, catalyzes the two-electron reduction of the C2 and C3(1) diene system of 15,16-dihydrobiliverdin. This Prochlorococcus marinus (strain MIT 9211) protein is Phycoerythrobilin:ferredoxin oxidoreductase.